A 288-amino-acid chain; its full sequence is Bifunctional protein FolD (288 aa).

NADP(+)-binding positions include 165-167 (GRS) and Ser-190.

Belongs to the tetrahydrofolate dehydrogenase/cyclohydrolase family. Homodimer.

It catalyses the reaction (6R)-5,10-methylene-5,6,7,8-tetrahydrofolate + NADP(+) = (6R)-5,10-methenyltetrahydrofolate + NADPH. The catalysed reaction is (6R)-5,10-methenyltetrahydrofolate + H2O = (6R)-10-formyltetrahydrofolate + H(+). The protein operates within one-carbon metabolism; tetrahydrofolate interconversion. Functionally, catalyzes the oxidation of 5,10-methylenetetrahydrofolate to 5,10-methenyltetrahydrofolate and then the hydrolysis of 5,10-methenyltetrahydrofolate to 10-formyltetrahydrofolate. This chain is Bifunctional protein FolD, found in Bdellovibrio bacteriovorus (strain ATCC 15356 / DSM 50701 / NCIMB 9529 / HD100).